Here is a 909-residue protein sequence, read N- to C-terminus: Protein translocase subunit SecA (909 aa).

ATP is bound by residues Gln-85, 103-107 (GEGKT), and Asp-512. The segment at 866–899 (HETSATGGEEEINKPVVKGKKIGRNDPCPCGSGK) is disordered. Zn(2+)-binding residues include Cys-893, Cys-895, Cys-904, and Cys-905.

Belongs to the SecA family. In terms of assembly, monomer and homodimer. Part of the essential Sec protein translocation apparatus which comprises SecA, SecYEG and auxiliary proteins SecDF. Other proteins may also be involved. It depends on Zn(2+) as a cofactor.

It is found in the cell membrane. It localises to the cytoplasm. It catalyses the reaction ATP + H2O + cellular proteinSide 1 = ADP + phosphate + cellular proteinSide 2.. Functionally, part of the Sec protein translocase complex. Interacts with the SecYEG preprotein conducting channel. Has a central role in coupling the hydrolysis of ATP to the transfer of proteins into and across the cell membrane, serving as an ATP-driven molecular motor driving the stepwise translocation of polypeptide chains across the membrane. In Finegoldia magna (strain ATCC 29328 / DSM 20472 / WAL 2508) (Peptostreptococcus magnus), this protein is Protein translocase subunit SecA.